The sequence spans 695 residues: U1 snRNP-associated protein usp107 (695 aa).

The segment covering 85 to 96 has biased composition (basic and acidic residues); that stretch reads RDNESQQKDRKN. The tract at residues 85 to 134 is disordered; sequence RDNESQQKDRKNLPRNQKSNEIQEKQTFQTPSSEKSTTERESRPFVPPNS. Residues 98 to 113 show a composition bias toward polar residues; it reads PRNQKSNEIQEKQTFQ. In terms of domain architecture, RRM spans 139-221; it reads RMLFIGNIPK…PSTRLSLITD (83 aa). Residues 265–369 adopt a coiled-coil conformation; that stretch reads DVRSRIERAA…NLLSKHRISR (105 aa). Basic and acidic residues-rich tracts occupy residues 487–506 and 548–561; these read EEDA…RTRG and SERR…RLLL. 2 disordered regions span residues 487–509 and 540–590; these read EEDA…GEGA and QTKK…AEKT. A PWI domain is found at 605 to 695; sequence ESLWALPIDW…HVLLILRSEA (91 aa).

In terms of assembly, component of the U1 snRNP particle, a subcomplex of the spliceosome. Interacts with prp5 and usp102.

It localises to the cytoplasm. Its subcellular location is the nucleus. In terms of biological role, component of the U1 snRNP particle, which recognizes and binds the 5'-splice site of pre-mRNA. Together with other non-snRNP factors, U1 snRNP forms the spliceosomal commitment complex, that targets pre-mRNA to the splicing pathway. This Schizosaccharomyces pombe (strain 972 / ATCC 24843) (Fission yeast) protein is U1 snRNP-associated protein usp107 (usp107).